The sequence spans 249 residues: Type I iodothyronine deiodinase (249 aa).

Residues 1–12 (MGLPRPGLWLKR) lie on the Extracellular side of the membrane. The helical; Signal-anchor for type III membrane protein transmembrane segment at 13 to 33 (LWVLVQVAVEVAVGKVLMTLF) threads the bilayer. Residues 34–249 (PERVKQNILA…VRAVLEELHS (216 aa)) lie on the Cytoplasmic side of the membrane. The active site involves Sec-126. Sec-126 is a non-standard amino acid (selenocysteine).

The protein belongs to the iodothyronine deiodinase family. As to quaternary structure, predominantly monomer. Can form homodimers but homodimerization is not essential for enzyme activity.

It localises to the cell membrane. Its subcellular location is the endoplasmic reticulum membrane. The protein resides in the basolateral cell membrane. The catalysed reaction is 3,3',5-triiodo-L-thyronine + iodide + A + H(+) = L-thyroxine + AH2. The enzyme catalyses 3,3',5'-triiodo-L-thyronine + iodide + A + H(+) = L-thyroxine + AH2. It carries out the reaction 3,3'-diiodo-L-thyronine + iodide + A + H(+) = 3,3',5'-triiodo-L-thyronine + AH2. It catalyses the reaction 3,3'-diiodo-L-thyronine + iodide + A + H(+) = 3,3',5-triiodo-L-thyronine + AH2. The catalysed reaction is 3'-iodo-L-thyronine + iodide + A + H(+) = 3',5'-diiodo-L-thyronine + AH2. The enzyme catalyses 3-iodo-L-thyronine + iodide + A + H(+) = 3,5-diiodo-L-thyronine + AH2. It carries out the reaction 3-iodo-L-thyronine + iodide + A + H(+) = 3,3'-diiodo-L-thyronine + AH2. It catalyses the reaction 3,3'-diiodothyronamine + iodide + A + H(+) = 3,3',5'-triiodothyronamine + AH2. The catalysed reaction is 3'-iodothyronamine + iodide + A + H(+) = 3',5'-diiodothyronamine + AH2. The enzyme catalyses 3-iodothyronamine + iodide + A + H(+) = 3,3'-diiodothyronamine + AH2. It carries out the reaction 3,3'-diiodothyronamine + iodide + A + H(+) = 3,3',5-triiodothyronamine + AH2. It catalyses the reaction 3-iodothyronamine + iodide + A + H(+) = 3,5-diiodothyronamine + AH2. The catalysed reaction is 3,3'-diiodo-L-thyronine sulfate + iodide + A + H(+) = 3,3',5'-triiodo-L-thyronine sulfate + AH2. The enzyme catalyses 3,3',5'-triiodo-L-thyronine sulfate + iodide + A + H(+) = L-thyroxine sulfate + AH2. It carries out the reaction 3,3'-diiodo-L-thyronine sulfate + iodide + A + H(+) = 3,3',5-triiodo-L-thyronine sulfate + AH2. In terms of biological role, plays a crucial role in the metabolism of thyroid hormones (TH) and has specific roles in TH activation and inactivation by deiodination. Catalyzes the deiodination of L-thyroxine (T4) to 3,5,3'-triiodothyronine (T3) via outer-ring deiodination (ORD) and of T4 to 3,3',5'-triiodothyronine (rT3) via inner-ring deiodination (IRD). Catalyzes the deiodiantion of rT3 to 3,3'-diiodothyronine (3,3'-T2) and 3',5'-diiodothyronine (3',5'-T2) to 3'-monoiodothyronine (3'-T1) via ORD. Catalyzes the deiodination of T3 to 3,3'-T2, 3,5-diiodothyronine (3,5-T2) to 3-monoiodothyronine (3-T1) and 3,3'-T2 to 3-T1 via IRD. Catalyzes the phenolic ring deiodinations of 3,3',5'-triiodothyronamine, 3',5'-diiodothyronamine and 3,3'-diiodothyronamine as well as tyrosyl ring deiodinations of 3,5,3'-triiodothyronamine and 3,5-diiodothyronamine. Catalyzes the deiodination of L-thyroxine sulfate and 3,3',5-triiodo-L-thyronine sulfate via IRD and of 3,3',5'-triiodo-L-thyronine sulfate via ORD. This is Type I iodothyronine deiodinase (DIO1) from Oryctolagus cuniculus (Rabbit).